The sequence spans 141 residues: Large ribosomal subunit protein uL11 (141 aa).

The protein belongs to the universal ribosomal protein uL11 family. As to quaternary structure, part of the ribosomal stalk of the 50S ribosomal subunit. Interacts with L10 and the large rRNA to form the base of the stalk. L10 forms an elongated spine to which L12 dimers bind in a sequential fashion forming a multimeric L10(L12)X complex. One or more lysine residues are methylated.

In terms of biological role, forms part of the ribosomal stalk which helps the ribosome interact with GTP-bound translation factors. The sequence is that of Large ribosomal subunit protein uL11 from Lacticaseibacillus casei (strain BL23) (Lactobacillus casei).